A 327-amino-acid polypeptide reads, in one-letter code: GMP reductase (327 aa).

C175 acts as the Thioimidate intermediate in catalysis. Residue 204–227 (IIADGGIRTNGDVAKSIRFGATMV) participates in NADP(+) binding.

This sequence belongs to the IMPDH/GMPR family. GuaC type 2 subfamily.

It carries out the reaction IMP + NH4(+) + NADP(+) = GMP + NADPH + 2 H(+). Its function is as follows. Catalyzes the irreversible NADPH-dependent deamination of GMP to IMP. It functions in the conversion of nucleobase, nucleoside and nucleotide derivatives of G to A nucleotides, and in maintaining the intracellular balance of A and G nucleotides. The sequence is that of GMP reductase from Bacillus cereus (strain ZK / E33L).